Reading from the N-terminus, the 66-residue chain is ATP synthase F(0) complex subunit 8 (66 aa).

Residues 8 to 24 traverse the membrane as a helical segment; it reads TWLTMILSMFLVLFIIF. Lysine 54 is subject to N6-acetyllysine; alternate. Lysine 54 carries the post-translational modification N6-succinyllysine; alternate. The residue at position 57 (lysine 57) is an N6-acetyllysine.

This sequence belongs to the ATPase protein 8 family. As to quaternary structure, component of the ATP synthase complex composed at least of ATP5F1A/subunit alpha, ATP5F1B/subunit beta, ATP5MC1/subunit c (homooctomer), MT-ATP6/subunit a, MT-ATP8/subunit 8, ATP5ME/subunit e, ATP5MF/subunit f, ATP5MG/subunit g, ATP5MK/subunit k, ATP5MJ/subunit j, ATP5F1C/subunit gamma, ATP5F1D/subunit delta, ATP5F1E/subunit epsilon, ATP5PF/subunit F6, ATP5PB/subunit b, ATP5PD/subunit d, ATP5PO/subunit OSCP. ATP synthase complex consists of a soluble F(1) head domain (subunits alpha(3) and beta(3)) - the catalytic core - and a membrane F(0) domain - the membrane proton channel (subunits c, a, 8, e, f, g, k and j). These two domains are linked by a central stalk (subunits gamma, delta, and epsilon) rotating inside the F1 region and a stationary peripheral stalk (subunits F6, b, d, and OSCP). Interacts with PRICKLE3.

Its subcellular location is the mitochondrion membrane. Subunit 8, of the mitochondrial membrane ATP synthase complex (F(1)F(0) ATP synthase or Complex V) that produces ATP from ADP in the presence of a proton gradient across the membrane which is generated by electron transport complexes of the respiratory chain. ATP synthase complex consist of a soluble F(1) head domain - the catalytic core - and a membrane F(1) domain - the membrane proton channel. These two domains are linked by a central stalk rotating inside the F(1) region and a stationary peripheral stalk. During catalysis, ATP synthesis in the catalytic domain of F(1) is coupled via a rotary mechanism of the central stalk subunits to proton translocation. In vivo, can only synthesize ATP although its ATP hydrolase activity can be activated artificially in vitro. Part of the complex F(0) domain. This is ATP synthase F(0) complex subunit 8 from Ovis aries (Sheep).